The following is a 286-amino-acid chain: Bifunctional protein FolD (286 aa).

NADP(+)-binding positions include 165–167 (GRS) and Ser-190.

It belongs to the tetrahydrofolate dehydrogenase/cyclohydrolase family. In terms of assembly, homodimer.

It catalyses the reaction (6R)-5,10-methylene-5,6,7,8-tetrahydrofolate + NADP(+) = (6R)-5,10-methenyltetrahydrofolate + NADPH. The catalysed reaction is (6R)-5,10-methenyltetrahydrofolate + H2O = (6R)-10-formyltetrahydrofolate + H(+). The protein operates within one-carbon metabolism; tetrahydrofolate interconversion. In terms of biological role, catalyzes the oxidation of 5,10-methylenetetrahydrofolate to 5,10-methenyltetrahydrofolate and then the hydrolysis of 5,10-methenyltetrahydrofolate to 10-formyltetrahydrofolate. This Staphylococcus aureus (strain USA300) protein is Bifunctional protein FolD.